A 74-amino-acid polypeptide reads, in one-letter code: MAKKPTQNFETTLQELESIVNHLEAGDLPLEQALTEFETAIKLVQQGQQRLQQAEQRIQILLNKDEQAELADYE.

The protein belongs to the XseB family. In terms of assembly, heterooligomer composed of large and small subunits.

Its subcellular location is the cytoplasm. It carries out the reaction Exonucleolytic cleavage in either 5'- to 3'- or 3'- to 5'-direction to yield nucleoside 5'-phosphates.. Bidirectionally degrades single-stranded DNA into large acid-insoluble oligonucleotides, which are then degraded further into small acid-soluble oligonucleotides. This is Exodeoxyribonuclease 7 small subunit from Haemophilus ducreyi (strain 35000HP / ATCC 700724).